A 20-amino-acid chain; its full sequence is Short cationic peptide-4b (20 aa).

E20 is modified (glutamic acid 1-amide).

As to expression, expressed by the venom gland.

The protein localises to the secreted. This chain is Short cationic peptide-4b, found in Cupiennius salei (American wandering spider).